Reading from the N-terminus, the 65-residue chain is Large ribosomal subunit protein bL35 (65 aa).

This sequence belongs to the bacterial ribosomal protein bL35 family.

This chain is Large ribosomal subunit protein bL35, found in Phytoplasma australiense.